The following is a 949-amino-acid chain: MAM domain-containing glycosylphosphatidylinositol anchor protein 2 (949 aa).

Positions 1–25 (MDLVYGLVWLLTVLLEGISGQGVYA) are cleaved as a signal peptide. 2 consecutive Ig-like domains span residues 27-127 (PTVR…IRVD) and 134-232 (PVVT…KMVS). Disulfide bonds link Cys-62/Cys-110 and Cys-159/Cys-216. N-linked (GlcNAc...) asparagine glycosylation is found at Asn-92, Asn-213, and Asn-237. 4 consecutive Ig-like domains span residues 242–328 (PSIK…NIIV), 340–436 (PDPY…VNIS), 442–533 (PNLT…ALVQ), and 540–627 (PAVE…FLVT). Intrachain disulfides connect Cys-264-Cys-310 and Cys-359-Cys-417. Asn-434, Asn-443, Asn-504, Asn-610, and Asn-703 each carry an N-linked (GlcNAc...) asparagine glycan. 2 cysteine pairs are disulfide-bonded: Cys-465–Cys-515 and Cys-561–Cys-611. The Fibronectin type-III domain maps to 638–738 (DTYNPVWQNR…TIRVIKYTGE (101 aa)). The region spanning 739-914 (FHCGFEDGNI…VSIAEGECAK (176 aa)) is the MAM domain. The GPI-anchor amidated aspartate moiety is linked to residue Asp-924. The propeptide at 925-949 (GAVGILVHIWLFPVIILISILSPRR) is removed in mature form.

In terms of assembly, interacts (through the Ig-like domains) with NLGN2. In terms of tissue distribution, expressed predominantly in neuronal tissue. Expressed in brain.

The protein localises to the cell membrane. May be involved in cell-cell interactions. The polypeptide is MAM domain-containing glycosylphosphatidylinositol anchor protein 2 (Mdga2) (Rattus norvegicus (Rat)).